Here is a 28-residue protein sequence, read N- to C-terminus: Cyclotide ltri-A (28 aa).

Residues 1 to 28 (GVACGESCVYLPCFTVGCTCTSSQCFKN) constitute a cross-link (cyclopeptide (Gly-Asn)). 3 disulfide bridges follow: C4–C18, C8–C20, and C13–C25.

The protein belongs to the cyclotide family. Bracelet subfamily. In terms of processing, this is a cyclic peptide.

Probably participates in a plant defense mechanism. This chain is Cyclotide ltri-A, found in Leonia triandra.